The chain runs to 384 residues: UPF0284 protein alr0297 (384 aa).

It belongs to the UPF0284 family.

The protein is UPF0284 protein alr0297 of Nostoc sp. (strain PCC 7120 / SAG 25.82 / UTEX 2576).